Reading from the N-terminus, the 147-residue chain is Lectin-like protein BA14k (147 aa).

A signal peptide spans 1-26; sequence MNSFRKTCAGALALIFGATSIVPTVA. The chain crosses the membrane as a helical span at residues 80 to 100; it reads GWWYPLAAFGAGAIIGGAISQ.

It belongs to the BA14k family.

The protein localises to the cell membrane. Has immunoglobulin-binding and hemagglutination properties, and can bind to mannose. Essential for virulence. May be involved in LPS biosynthesis or polysaccharide transport. This is Lectin-like protein BA14k from Brucella abortus (strain S19).